The sequence spans 46 residues: Denclatoxin-B (46 aa).

3 disulfides stabilise this stretch: Cys-3–Cys-40, Cys-4–Cys-32, and Cys-16–Cys-26.

The protein belongs to the plant thionin (TC 1.C.44) family.

The protein localises to the secreted. Its function is as follows. Thionins are small plant proteins which are toxic to animal cells. They seem to exert their toxic effect at the level of the cell membrane. Their precise function is not known. The polypeptide is Denclatoxin-B (Dendrophthora clavata (Columbian mistletoe)).